The following is a 431-amino-acid chain: Enolase (431 aa).

Gln167 provides a ligand contact to (2R)-2-phosphoglycerate. Residue Glu209 is the Proton donor of the active site. Asp246, Glu289, and Asp316 together coordinate Mg(2+). Residues Lys341, Arg370, Ser371, and Lys392 each contribute to the (2R)-2-phosphoglycerate site. The Proton acceptor role is filled by Lys341.

This sequence belongs to the enolase family. In terms of assembly, component of the RNA degradosome, a multiprotein complex involved in RNA processing and mRNA degradation. Requires Mg(2+) as cofactor.

It localises to the cytoplasm. The protein resides in the secreted. The protein localises to the cell surface. The enzyme catalyses (2R)-2-phosphoglycerate = phosphoenolpyruvate + H2O. Its pathway is carbohydrate degradation; glycolysis; pyruvate from D-glyceraldehyde 3-phosphate: step 4/5. In terms of biological role, catalyzes the reversible conversion of 2-phosphoglycerate (2-PG) into phosphoenolpyruvate (PEP). It is essential for the degradation of carbohydrates via glycolysis. In Shewanella oneidensis (strain ATCC 700550 / JCM 31522 / CIP 106686 / LMG 19005 / NCIMB 14063 / MR-1), this protein is Enolase.